The following is a 508-amino-acid chain: Endoglucanase 6 (508 aa).

Residues 1–33 form the signal peptide; sequence MLAASLRVEAVAVVAAAVLVLLLSPAAVVVVAG. Asp-89 (nucleophile) is an active-site residue. Catalysis depends on residues His-419, Asp-471, and Glu-480.

Belongs to the glycosyl hydrolase 9 (cellulase E) family.

The protein localises to the secreted. It carries out the reaction Endohydrolysis of (1-&gt;4)-beta-D-glucosidic linkages in cellulose, lichenin and cereal beta-D-glucans.. This chain is Endoglucanase 6, found in Oryza sativa subsp. japonica (Rice).